A 158-amino-acid polypeptide reads, in one-letter code: Ribosome maturation factor RimP (158 aa).

This sequence belongs to the RimP family.

Its subcellular location is the cytoplasm. Required for maturation of 30S ribosomal subunits. The polypeptide is Ribosome maturation factor RimP (Aquifex aeolicus (strain VF5)).